The following is a 101-amino-acid chain: Large ribosomal subunit protein uL24 (101 aa).

Belongs to the universal ribosomal protein uL24 family. As to quaternary structure, part of the 50S ribosomal subunit.

Functionally, one of two assembly initiator proteins, it binds directly to the 5'-end of the 23S rRNA, where it nucleates assembly of the 50S subunit. One of the proteins that surrounds the polypeptide exit tunnel on the outside of the subunit. This chain is Large ribosomal subunit protein uL24, found in Ligilactobacillus salivarius (strain UCC118) (Lactobacillus salivarius).